Reading from the N-terminus, the 224-residue chain is uncharacterized protein (224 aa).

3 N-linked (GlcNAc...) asparagine glycosylation sites follow: Asn10, Asn70, and Asn74.

It is found in the endoplasmic reticulum. This is an uncharacterized protein from Saccharomyces cerevisiae (strain ATCC 204508 / S288c) (Baker's yeast).